The sequence spans 492 residues: Ferruginol synthase (492 aa).

Residues Met1–Ser21 form a helical membrane-spanning segment. Over Gly22 to Pro492 the chain is Cytoplasmic. Heme is bound at residue Cys436.

This sequence belongs to the cytochrome P450 family. The cofactor is heme.

It localises to the endoplasmic reticulum membrane. It carries out the reaction abieta-8,11,13-triene + reduced [NADPH--hemoprotein reductase] + O2 = ferruginol + oxidized [NADPH--hemoprotein reductase] + H2O + H(+). The protein operates within secondary metabolite biosynthesis; terpenoid biosynthesis. Its function is as follows. Cytochrome P450 enzyme (CYP) which catalyzes a unique two-electron oxidation cascade on abieta-8,11,13-triene to produce ferruginol, an intermediate in tanshinone biosynthesis. The chain is Ferruginol synthase from Isodon rubescens (Rabdosia rubescens).